The chain runs to 209 residues: Uracil phosphoribosyltransferase (209 aa).

Residues Arg-79, Arg-104, and Asp-131–Ser-139 each bind 5-phospho-alpha-D-ribose 1-diphosphate. Uracil is bound by residues Ile-194 and Gly-199 to Ala-201. Asp-200 contributes to the 5-phospho-alpha-D-ribose 1-diphosphate binding site.

It belongs to the UPRTase family. The cofactor is Mg(2+).

It carries out the reaction UMP + diphosphate = 5-phospho-alpha-D-ribose 1-diphosphate + uracil. The protein operates within pyrimidine metabolism; UMP biosynthesis via salvage pathway; UMP from uracil: step 1/1. Its activity is regulated as follows. Allosterically activated by GTP. Functionally, catalyzes the conversion of uracil and 5-phospho-alpha-D-ribose 1-diphosphate (PRPP) to UMP and diphosphate. This Streptococcus pyogenes serotype M1 protein is Uracil phosphoribosyltransferase.